A 307-amino-acid chain; its full sequence is Aspartate carbamoyltransferase catalytic subunit (307 aa).

2 residues coordinate carbamoyl phosphate: arginine 56 and threonine 57. Residue lysine 84 coordinates L-aspartate. Residues arginine 106, histidine 136, and glutamine 139 each coordinate carbamoyl phosphate. L-aspartate contacts are provided by arginine 169 and arginine 221. The carbamoyl phosphate site is built by alanine 262 and proline 263.

Belongs to the aspartate/ornithine carbamoyltransferase superfamily. ATCase family. As to quaternary structure, heterododecamer (2C3:3R2) of six catalytic PyrB chains organized as two trimers (C3), and six regulatory PyrI chains organized as three dimers (R2).

It carries out the reaction carbamoyl phosphate + L-aspartate = N-carbamoyl-L-aspartate + phosphate + H(+). Its pathway is pyrimidine metabolism; UMP biosynthesis via de novo pathway; (S)-dihydroorotate from bicarbonate: step 2/3. Its function is as follows. Catalyzes the condensation of carbamoyl phosphate and aspartate to form carbamoyl aspartate and inorganic phosphate, the committed step in the de novo pyrimidine nucleotide biosynthesis pathway. The chain is Aspartate carbamoyltransferase catalytic subunit from Streptococcus pneumoniae (strain P1031).